A 278-amino-acid polypeptide reads, in one-letter code: MGNVIRVQHLNYTYPEAKQQALTDVSFDVAKGEWLAIIGHNGSGKSTLAKNLNGLLAPESGTVQVAGMTLSEETVWDIRAKVGIVFQNPDNQFVGATVADDVAFGLENRGVPRPEMIKRVDEALDRVGMTAFADREPARLSGGQKQRVAIAGIVAQRPEIIILDESTSMLDPAGRQEVLGVIRELKDELGLTVLSITHDIDEAAEAHRIILLNDGKINEIGTPSEIFSHGMELLRLGLDVPYSEKLKDALAQRGIAMPKDYMDNERLVDYLWTLHSTM.

The 235-residue stretch at 5 to 239 folds into the ABC transporter domain; the sequence is IRVQHLNYTY…GMELLRLGLD (235 aa). Residue 39–46 coordinates ATP; sequence GHNGSGKS. Residue glutamate 165 is the Proton acceptor of the active site.

It belongs to the ABC transporter superfamily. Energy-coupling factor EcfA family. In terms of assembly, forms a stable energy-coupling factor (ECF) transporter complex probably composed of 2 membrane-embedded substrate-binding proteins (S component), 2 ATP-binding proteins (A component) and 2 transmembrane proteins (T component). This complex interacts with a number of substrate-specific components, including FolT and ThiT for 5-formyltetrahydrofolate and thiamine respectively.

It is found in the cell membrane. Functionally, ATP-binding (A) component of a common energy-coupling factor (ECF) ABC-transporter complex. Unlike classic ABC transporters this ECF transporter provides the energy necessary to transport a number of different substrates including 5-formyltetrahydrofolate and thiamine. Expression of the complex plus FolT or ThiT in Lactococcus lactis subsp. cremoris (strain NZ9000) allows 5-formyltetrahydrofolate or thiamine uptake respectively; 5-formyltetrahydrofolate or thiamine are not taken up in the absence of FolT/ThiT or the EcfA1A2T complex. Deenergized L.lactis subsp. cremoris (treated with 2-deoxyglucose) does not take up substrate. The protein is Energy-coupling factor transporter ATP-binding protein EcfA1 of Lacticaseibacillus paracasei (strain ATCC 334 / BCRC 17002 / CCUG 31169 / CIP 107868 / KCTC 3260 / NRRL B-441) (Lactobacillus paracasei).